A 465-amino-acid chain; its full sequence is Keratin, type I cytoskeletal 13 (465 aa).

Polar residues predominate over residues 1 to 28 (MNFTSFSITQGSRPQPPSTRGFSGNSFK). The segment at 1 to 47 (MNFTSFSITQGSRPQPPSTRGFSGNSFKSDLIPQSRRSHSVYGTPGS) is disordered. The segment at 1–98 (MNFTSFSITQ…SGGSDLLLGT (98 aa)) is head. The coil 1A stretch occupies residues 99-135 (SGKEAMQNLNDRLASYLEKVRSLEERNRELEQKIREW). The IF rod domain occupies 100-412 (GKEAMQNLND…ILLEGDEGKF (313 aa)). The linker 1 stretch occupies residues 136–154 (YEKQGAGTKTKDFSHYFKI). The interval 155-246 (IADLQKQIHD…KSHDEEMKAL (92 aa)) is coil 1B. The interval 247–269 (RSQLGGQVNVEVDAAPAEDLTKK) is linker 12. The tract at residues 270–408 (LERMRQQYEQ…RTYRILLEGD (139 aa)) is coil 2. A tail region spans residues 409–465 (EGKFQTSPHHPSIVTKQTETVVTPVVITNVKTVVEEIIDGKIVSKKEYPGPPEKLMI).

It belongs to the intermediate filament family. Heterotetramer of two type I and two type II keratins. In terms of tissue distribution, expressed in skin.

Its function is as follows. Type 1 keratin. May maintain oral mucosal cell homeostasis and tissue organization in response to mechanical stress. The polypeptide is Keratin, type I cytoskeletal 13 (KRT13) (Protopterus aethiopicus (Marbled lungfish)).